A 422-amino-acid polypeptide reads, in one-letter code: Enolase (422 aa).

Position 162 (Gln-162) interacts with (2R)-2-phosphoglycerate. The active-site Proton donor is Glu-204. Mg(2+) contacts are provided by Asp-241, Glu-284, and Asp-311. (2R)-2-phosphoglycerate-binding residues include Lys-336, Arg-365, Ser-366, and Lys-387. Lys-336 serves as the catalytic Proton acceptor.

The protein belongs to the enolase family. It depends on Mg(2+) as a cofactor.

It localises to the cytoplasm. The protein resides in the secreted. The protein localises to the cell surface. The enzyme catalyses (2R)-2-phosphoglycerate = phosphoenolpyruvate + H2O. Its pathway is carbohydrate degradation; glycolysis; pyruvate from D-glyceraldehyde 3-phosphate: step 4/5. Functionally, catalyzes the reversible conversion of 2-phosphoglycerate (2-PG) into phosphoenolpyruvate (PEP). It is essential for the degradation of carbohydrates via glycolysis. In Thermus thermophilus (strain ATCC 27634 / DSM 579 / HB8), this protein is Enolase.